A 195-amino-acid polypeptide reads, in one-letter code: dCTP deaminase (195 aa).

DCTP contacts are provided by residues 110-115 (RSSLAR), D128, 136-138 (VLE), Y171, K178, and Q182. Residue E138 is the Proton donor/acceptor of the active site. Residues 169-179 (RPYSSRKDAKY) are compositionally biased toward basic and acidic residues. The interval 169–195 (RPYSSRKDAKYKNQQSAVASRIDEDKE) is disordered.

The protein belongs to the dCTP deaminase family. In terms of assembly, homotrimer.

The enzyme catalyses dCTP + H2O + H(+) = dUTP + NH4(+). The protein operates within pyrimidine metabolism; dUMP biosynthesis; dUMP from dCTP (dUTP route): step 1/2. Catalyzes the deamination of dCTP to dUTP. The chain is dCTP deaminase from Haemophilus influenzae (strain 86-028NP).